A 95-amino-acid polypeptide reads, in one-letter code: Glutamyl-tRNA(Gln) amidotransferase subunit C (95 aa).

Belongs to the GatC family. In terms of assembly, heterotrimer of A, B and C subunits.

It carries out the reaction L-glutamyl-tRNA(Gln) + L-glutamine + ATP + H2O = L-glutaminyl-tRNA(Gln) + L-glutamate + ADP + phosphate + H(+). It catalyses the reaction L-aspartyl-tRNA(Asn) + L-glutamine + ATP + H2O = L-asparaginyl-tRNA(Asn) + L-glutamate + ADP + phosphate + 2 H(+). Its function is as follows. Allows the formation of correctly charged Asn-tRNA(Asn) or Gln-tRNA(Gln) through the transamidation of misacylated Asp-tRNA(Asn) or Glu-tRNA(Gln) in organisms which lack either or both of asparaginyl-tRNA or glutaminyl-tRNA synthetases. The reaction takes place in the presence of glutamine and ATP through an activated phospho-Asp-tRNA(Asn) or phospho-Glu-tRNA(Gln). In Mesorhizobium japonicum (strain LMG 29417 / CECT 9101 / MAFF 303099) (Mesorhizobium loti (strain MAFF 303099)), this protein is Glutamyl-tRNA(Gln) amidotransferase subunit C.